The primary structure comprises 571 residues: Urease subunit alpha (571 aa).

The region spanning 134–571 (GAIDTHIHFI…LPMAQRYFLF (438 aa)) is the Urease domain. The Ni(2+) site is built by His139, His141, and Lys222. N6-carboxylysine is present on Lys222. His224 is a binding site for substrate. Ni(2+)-binding residues include His251 and His277. Residue His325 is the Proton donor of the active site. Asp365 contributes to the Ni(2+) binding site.

This sequence belongs to the metallo-dependent hydrolases superfamily. Urease alpha subunit family. As to quaternary structure, heterotrimer of UreA (gamma), UreB (beta) and UreC (alpha) subunits. Three heterotrimers associate to form the active enzyme. The cofactor is Ni cation. Carboxylation allows a single lysine to coordinate two nickel ions.

Its subcellular location is the cytoplasm. The catalysed reaction is urea + 2 H2O + H(+) = hydrogencarbonate + 2 NH4(+). The protein operates within nitrogen metabolism; urea degradation; CO(2) and NH(3) from urea (urease route): step 1/1. The sequence is that of Urease subunit alpha from Bordetella parapertussis (strain 12822 / ATCC BAA-587 / NCTC 13253).